A 352-amino-acid chain; its full sequence is Selenide, water dikinase (352 aa).

C23 is a catalytic residue. ATP contacts are provided by residues K26 and 54–56 (SRD). D57 contacts Mg(2+). ATP-binding positions include D74, D97, and 145-147 (GHS). D97 serves as a coordination point for Mg(2+). D233 contacts Mg(2+).

This sequence belongs to the selenophosphate synthase 1 family. Class I subfamily. As to quaternary structure, homodimer. Mg(2+) serves as cofactor.

The enzyme catalyses hydrogenselenide + ATP + H2O = selenophosphate + AMP + phosphate + 2 H(+). Its function is as follows. Synthesizes selenophosphate from selenide and ATP. In Shewanella baltica (strain OS155 / ATCC BAA-1091), this protein is Selenide, water dikinase.